Reading from the N-terminus, the 519-residue chain is Transketolase, chloroplastic (519 aa).

Asp11 provides a ligand contact to Mg(2+). Thiamine diphosphate contacts are provided by Gly12 and Asn41. Asn41 and Ile43 together coordinate Mg(2+). Thiamine diphosphate is bound at residue His118. Residues His118, Arg212, and Ser239 each coordinate substrate. Residues Glu266 and Phe293 each coordinate thiamine diphosphate. The Proton donor role is filled by Glu266. Residues His317, Asp325, and Arg376 each coordinate substrate.

It belongs to the transketolase family. In terms of assembly, homodimer. Mg(2+) serves as cofactor. The cofactor is Ca(2+). Requires Mn(2+) as cofactor. Co(2+) is required as a cofactor. It depends on thiamine diphosphate as a cofactor. Constitutively expressed in leaves and roots.

Its subcellular location is the plastid. The protein localises to the chloroplast. It catalyses the reaction D-sedoheptulose 7-phosphate + D-glyceraldehyde 3-phosphate = aldehydo-D-ribose 5-phosphate + D-xylulose 5-phosphate. Catalyzes the transfer of a two-carbon ketol group from a ketose donor to an aldose acceptor, via a covalent intermediate with the cofactor thiamine pyrophosphate. In Craterostigma plantagineum (Blue gem), this protein is Transketolase, chloroplastic (TKT3).